A 331-amino-acid chain; its full sequence is Putative NAD(P)H nitroreductase acg (331 aa).

FMN is bound by residues Gln-28–Trp-32 and Arg-316.

Belongs to the nitroreductase family. It depends on FMN as a cofactor.

This Mycobacterium tuberculosis (strain CDC 1551 / Oshkosh) protein is Putative NAD(P)H nitroreductase acg (acg).